Here is a 210-residue protein sequence, read N- to C-terminus: 3-oxo-tetronate 4-phosphate decarboxylase (210 aa).

Catalysis depends on Glu74, which acts as the Proton acceptor. The Zn(2+) site is built by Glu74, His93, and His95. Tyr120 serves as the catalytic Proton donor. His160 is a binding site for Zn(2+).

This sequence belongs to the aldolase class II family. AraD/FucA subfamily. Zn(2+) is required as a cofactor.

The catalysed reaction is 3-dehydro-4-O-phospho-D-erythronate + H(+) = dihydroxyacetone phosphate + CO2. The enzyme catalyses 3-dehydro-4-O-phospho-L-erythronate + H(+) = dihydroxyacetone phosphate + CO2. Its function is as follows. Catalyzes the decarboxylation of 3-oxo-tetronate 4-phosphate to dihydroxyacetone phosphate (DHAP) and CO(2). The protein is 3-oxo-tetronate 4-phosphate decarboxylase of Haemophilus influenzae (strain ATCC 51907 / DSM 11121 / KW20 / Rd).